The primary structure comprises 769 residues: Serine protease HtrA-like (769 aa).

Over residues 1–20 (MDIGKKHVIPKSQYRRKRRE) the composition is skewed to basic residues. Positions 1–390 (MDIGKKHVIP…ATSKLNKGRA (390 aa)) are disordered. 2 stretches are compositionally biased toward basic and acidic residues: residues 21-64 (FFHN…ERFK) and 71-108 (LEQRNRDVNENKAEESKSNQDSKSAYNRDHYLTDDVSK). A compositionally biased stretch (polar residues) spans 126 to 137 (YEQNSEATLSTK). Residues 138–186 (STDKVESSDMRKLSPDKNKVGHEEQHVLSKPSEHDKETRIDFESSRTDS) show a composition bias toward basic and acidic residues. 2 stretches are compositionally biased toward polar residues: residues 202-221 (GNESSNLKSEVISDKSNTVP) and 247-262 (QQSQNEQTKTYTYGDS). Over residues 264–295 (QNDKSNHENDLSHHTPSKSDDKDNVMREDHIV) the composition is skewed to basic and acidic residues. Residues 298–308 (NPDNDINTPSL) are compositionally biased toward polar residues. The span at 310-330 (KIDDDRKLDEKIHVEDKHKQN) shows a compositional bias: basic and acidic residues. Positions 331-347 (ADSSETVGYQSQSSVSH) are enriched in polar residues. A compositionally biased stretch (basic and acidic residues) spans 348-362 (RSTEKRNMAINDHHK). Positions 366–390 (QKLNTKTSANNNQKKATSKLNKGRA) are enriched in polar residues. The helical transmembrane segment at 410 to 430 (LVILMGIIILIVILNAIFNNV) threads the bilayer. Catalysis depends on charge relay system residues His504, Asp534, and Ser619. The region spanning 680 to 733 (IASLNSFERQAVKLPGKVKNGVVVDQVDNNGLADQSSLKKGDVITELDGKLLED) is the PDZ domain.

The protein belongs to the peptidase S1C family.

The protein localises to the cell membrane. In Staphylococcus aureus (strain bovine RF122 / ET3-1), this protein is Serine protease HtrA-like.